The chain runs to 160 residues: Transcription elongation factor GreB (160 aa).

This sequence belongs to the GreA/GreB family. GreB subfamily.

Functionally, necessary for efficient RNA polymerase transcription elongation past template-encoded arresting sites. The arresting sites in DNA have the property of trapping a certain fraction of elongating RNA polymerases that pass through, resulting in locked ternary complexes. Cleavage of the nascent transcript by cleavage factors such as GreA or GreB allows the resumption of elongation from the new 3'terminus. GreB releases sequences of up to 9 nucleotides in length. This is Transcription elongation factor GreB from Vibrio vulnificus (strain CMCP6).